A 314-amino-acid chain; its full sequence is 4-hydroxy-3-methylbut-2-enyl diphosphate reductase (314 aa).

Cys12 contributes to the [4Fe-4S] cluster binding site. (2E)-4-hydroxy-3-methylbut-2-enyl diphosphate contacts are provided by His43 and His81. Dimethylallyl diphosphate contacts are provided by His43 and His81. Isopentenyl diphosphate contacts are provided by His43 and His81. Cys103 provides a ligand contact to [4Fe-4S] cluster. His131 is a binding site for (2E)-4-hydroxy-3-methylbut-2-enyl diphosphate. A dimethylallyl diphosphate-binding site is contributed by His131. His131 serves as a coordination point for isopentenyl diphosphate. Glu133 (proton donor) is an active-site residue. Thr170 is a binding site for (2E)-4-hydroxy-3-methylbut-2-enyl diphosphate. Residue Cys198 participates in [4Fe-4S] cluster binding. 3 residues coordinate (2E)-4-hydroxy-3-methylbut-2-enyl diphosphate: Ser226, Asn228, and Ser271. Residues Ser226, Asn228, and Ser271 each contribute to the dimethylallyl diphosphate site. Isopentenyl diphosphate contacts are provided by Ser226, Asn228, and Ser271.

This sequence belongs to the IspH family. [4Fe-4S] cluster serves as cofactor.

The catalysed reaction is isopentenyl diphosphate + 2 oxidized [2Fe-2S]-[ferredoxin] + H2O = (2E)-4-hydroxy-3-methylbut-2-enyl diphosphate + 2 reduced [2Fe-2S]-[ferredoxin] + 2 H(+). It catalyses the reaction dimethylallyl diphosphate + 2 oxidized [2Fe-2S]-[ferredoxin] + H2O = (2E)-4-hydroxy-3-methylbut-2-enyl diphosphate + 2 reduced [2Fe-2S]-[ferredoxin] + 2 H(+). It functions in the pathway isoprenoid biosynthesis; dimethylallyl diphosphate biosynthesis; dimethylallyl diphosphate from (2E)-4-hydroxy-3-methylbutenyl diphosphate: step 1/1. It participates in isoprenoid biosynthesis; isopentenyl diphosphate biosynthesis via DXP pathway; isopentenyl diphosphate from 1-deoxy-D-xylulose 5-phosphate: step 6/6. In terms of biological role, catalyzes the conversion of 1-hydroxy-2-methyl-2-(E)-butenyl 4-diphosphate (HMBPP) into a mixture of isopentenyl diphosphate (IPP) and dimethylallyl diphosphate (DMAPP). Acts in the terminal step of the DOXP/MEP pathway for isoprenoid precursor biosynthesis. The chain is 4-hydroxy-3-methylbut-2-enyl diphosphate reductase from Bacillus pumilus (strain SAFR-032).